The primary structure comprises 652 residues: 2-oxoglutarate carboxylase large subunit (652 aa).

Residues 26-288 enclose the Pyruvate carboxyltransferase domain; it reads ILITDLTPRD…DTGIDMKKLD (263 aa). Substrate is bound by residues 34-38 and Arg-105; that span reads RDGQQ. Asp-35 provides a ligand contact to a divalent metal cation. Positions 196, 227, and 229 each coordinate a divalent metal cation. The residue at position 196 (Lys-196) is an N6-carboxylysine. Thr-362 provides a ligand contact to substrate. In terms of domain architecture, Biotinyl-binding spans 563–643; the sequence is AEEKGIPKAT…TPDDALLRIK (81 aa). Lys-609 carries the post-translational modification N6-biotinyllysine.

In terms of assembly, heterohexadecamer of 8 large subunits and 8 small subunits. Requires Mg(2+) as cofactor. It depends on Mn(2+) as a cofactor. Co(2+) is required as a cofactor. Biotinylated.

The enzyme catalyses hydrogencarbonate + 2-oxoglutarate + ATP = (S)-oxalosuccinate + ADP + phosphate + H(+). The polypeptide is 2-oxoglutarate carboxylase large subunit (Hydrogenobacter thermophilus (strain DSM 6534 / IAM 12695 / TK-6)).